The primary structure comprises 418 residues: MGVSKKKSGEIRGDLIPGLPEELAIECLVRVPFQFHSSIKSVCRSWKCVISSRSFIKERIGFGKAESLLCLVQPLTSPPSPAMMEGGEMSQKKKEEEEGESQMTQQLLQPRITGTPLYGLSVYNATLDTWHRVAIPERIPLFCECVAIQDAGKVLLIGGWDPETLQPVRDVFVLDFFAGEGSGRRFRRGRPMSAARSFFACASVGSTKVYVAGGHDDQKNALRSAEVYDVEKDEWSMLPPMTEGRDECHGFSMATDPGFCVLSGYGTETQGQFRSDGEIYDPITNSWSTIENVWPFPDLSPRGRTAAAAAEFPGDFRGCRLWCFIDSERQSQPHWEVEDDSMKWKVIMDTIRLPVTTMTSVFAGSLSGQAVAMIGGGGEESGTMMVKTTAEKNGGKWSHVNTPSGFSSLPFSCSSIYV.

The F-box domain maps to 14–61 (DLIPGLPEELAIECLVRVPFQFHSSIKSVCRSWKCVISSRSFIKERIG). Residues 79-104 (PSPAMMEGGEMSQKKKEEEEGESQMT) form a disordered region. 4 Kelch repeats span residues 104 to 150 (TQQL…AIQD), 153 to 206 (KVLL…SVGS), 208 to 255 (KVYV…SMAT), and 258 to 314 (GFCV…EFPG).

Part of a SCF (ASK-cullin-F-box) protein ligase complex. Interacts with SKP1A/ASK1 and SPK1B/ASK2.

The protein localises to the nucleus. It functions in the pathway protein modification; protein ubiquitination. Component of SCF(ASK-cullin-F-box) E3 ubiquitin ligase complexes, which may mediate the ubiquitination and subsequent proteasomal degradation of target proteins. In Arabidopsis thaliana (Mouse-ear cress), this protein is F-box/kelch-repeat protein SKIP20 (SKIP20).